A 268-amino-acid polypeptide reads, in one-letter code: Enoyl-[acyl-carrier-protein] reductase [NADH] (268 aa).

NAD(+)-binding positions include 20-21 (SI), 64-65 (DV), and 95-96 (IA). Tyr-157 lines the substrate pocket. Residues Lys-164 and Ile-193 each contribute to the NAD(+) site.

It belongs to the short-chain dehydrogenases/reductases (SDR) family. FabI subfamily. Homodimer. Homotetramer.

It carries out the reaction a 2,3-saturated acyl-[ACP] + NAD(+) = a (2E)-enoyl-[ACP] + NADH + H(+). It catalyses the reaction a 2,3-saturated acyl-CoA + NAD(+) = a (2E)-enoyl-CoA + NADH + H(+). The protein operates within lipid metabolism; mycolic acid biosynthesis. Enoyl-ACP reductase of the type II fatty acid syntase (FAS-II) system, which is involved in the biosynthesis of mycolic acids, a major component of mycobacterial cell walls. Catalyzes the NADH-dependent reduction of the double bond of 2-trans-enoyl-[acyl-carrier protein], an essential step in the fatty acid elongation cycle of the FAS-II pathway. Shows preference for long-chain fatty acyl thioester substrates, and can also use 2-trans-enoyl-CoAs as alternative substrates. The mycobacterial FAS-II system utilizes the products of the FAS-I system as primers to extend fatty acyl chain lengths up to C56, forming the meromycolate chain that serves as the precursor for final mycolic acids. This chain is Enoyl-[acyl-carrier-protein] reductase [NADH], found in Mycobacterium avium.